A 360-amino-acid polypeptide reads, in one-letter code: Photosystem II protein D1 (360 aa).

3 helical membrane-spanning segments follow: residues 30–47, 119–134, and 143–157; these read YVGW…TAAA, HFLI…QWEL, and WICV…AAFA. Position 119 (His119) interacts with chlorophyll a. A pheophytin a-binding site is contributed by Tyr127. The [CaMn4O5] cluster site is built by Asp171 and Glu190. The helical transmembrane segment at 198–219 threads the bilayer; sequence FHMAGVAGMFGGSLFSAMHGSL. Residue His199 coordinates chlorophyll a. Residues His216 and 265 to 266 contribute to the a quinone site; that span reads SF. His216 contributes to the Fe cation binding site. His273 contacts Fe cation. A helical membrane pass occupies residues 275–289; it reads FLAVFPVVCVWLTSM. [CaMn4O5] cluster is bound by residues His333, Glu334, Asp343, and Ala345. Residues 346-360 constitute a propeptide that is removed on maturation; it reads AAESTTVALSAPAIG.

This sequence belongs to the reaction center PufL/M/PsbA/D family. PSII is composed of 1 copy each of membrane proteins PsbA, PsbB, PsbC, PsbD, PsbE, PsbF, PsbH, PsbI, PsbJ, PsbK, PsbL, PsbM, PsbT, PsbX, PsbY, Psb30/Ycf12, peripheral proteins PsbO, CyanoQ (PsbQ), PsbU, PsbV and a large number of cofactors. It forms dimeric complexes. The cofactor is The D1/D2 heterodimer binds P680, chlorophylls that are the primary electron donor of PSII, and subsequent electron acceptors. It shares a non-heme iron and each subunit binds pheophytin, quinone, additional chlorophylls, carotenoids and lipids. D1 provides most of the ligands for the Mn4-Ca-O5 cluster of the oxygen-evolving complex (OEC). There is also a Cl(-1) ion associated with D1 and D2, which is required for oxygen evolution. The PSII complex binds additional chlorophylls, carotenoids and specific lipids.. Tyr-162 forms a radical intermediate that is referred to as redox-active TyrZ, YZ or Y-Z. Post-translationally, C-terminally processed by CtpA; processing is essential to allow assembly of the oxygen-evolving complex and thus photosynthetic growth.

The protein localises to the cellular thylakoid membrane. It carries out the reaction 2 a plastoquinone + 4 hnu + 2 H2O = 2 a plastoquinol + O2. Photosystem II (PSII) is a light-driven water:plastoquinone oxidoreductase that uses light energy to abstract electrons from H(2)O, generating O(2) and a proton gradient subsequently used for ATP formation. It consists of a core antenna complex that captures photons, and an electron transfer chain that converts photonic excitation into a charge separation. The D1/D2 (PsbA/PsbD) reaction center heterodimer binds P680, the primary electron donor of PSII as well as several subsequent electron acceptors. In Prochlorococcus marinus (strain MIT 9301), this protein is Photosystem II protein D1.